The chain runs to 508 residues: Photosystem II CP47 reaction center protein (508 aa).

Helical transmembrane passes span 21–36 (SVHIMHTALVAGWAGS), 101–115 (IVFSGLCFLAAIWHW), 140–156 (GIHLFLSGLACFGFGAF), 203–218 (IAAGTLGILAGLFHLS), 237–252 (VLSSSIAAVFFAAFVV), and 457–472 (SFALLFFFGHIWHGAR).

The protein belongs to the PsbB/PsbC family. PsbB subfamily. PSII is composed of 1 copy each of membrane proteins PsbA, PsbB, PsbC, PsbD, PsbE, PsbF, PsbH, PsbI, PsbJ, PsbK, PsbL, PsbM, PsbT, PsbX, PsbY, PsbZ, Psb30/Ycf12, at least 3 peripheral proteins of the oxygen-evolving complex and a large number of cofactors. It forms dimeric complexes. Binds multiple chlorophylls. PSII binds additional chlorophylls, carotenoids and specific lipids. serves as cofactor.

Its subcellular location is the plastid. It localises to the chloroplast thylakoid membrane. Its function is as follows. One of the components of the core complex of photosystem II (PSII). It binds chlorophyll and helps catalyze the primary light-induced photochemical processes of PSII. PSII is a light-driven water:plastoquinone oxidoreductase, using light energy to abstract electrons from H(2)O, generating O(2) and a proton gradient subsequently used for ATP formation. The chain is Photosystem II CP47 reaction center protein from Vitis vinifera (Grape).